The sequence spans 282 residues: NAC domain-containing protein 1 (282 aa).

An NAC domain is found at 9-161 (LPPGFRFHPT…DWVLCRIYKK (153 aa)). A DNA-binding region spans residues 106–167 (VGIKKALVFY…IYKKKNLGRT (62 aa)). Residues 161–188 (KKNLGRTIEMMKVEEEELEAQNVSTTNN) are a coiled coil.

As to expression, expressed in roots, stem, flowers, and leaves.

It localises to the nucleus. Transcription factor that binds DNA motifs 5'-CGT[AG](5N)NACG[ACT][AC][AT][ACG][ACT]-3' and 5'-CACG[ACT][AC][AT][AGT][CT]-3' in target genes promoters. Promotes leaf senescence and reduces fruit yield and sugar content, probably by establishing abscisic acid (ABA) homeostasis. The protein is NAC domain-containing protein 1 of Solanum lycopersicum (Tomato).